We begin with the raw amino-acid sequence, 679 residues long: Methionine--tRNA ligase (679 aa).

The short motif at 14 to 24 (PYANGSIHLGH) is the 'HIGH' region element. Residues C145, C148, C158, and C161 each contribute to the Zn(2+) site. A 'KMSKS' region motif is present at residues 331 to 335 (KMSKS). K334 is an ATP binding site. Residues 577-679 (TFAAVDLRVA…SGAKPGQRIK (103 aa)) form the tRNA-binding domain.

Belongs to the class-I aminoacyl-tRNA synthetase family. MetG type 1 subfamily. In terms of assembly, homodimer. It depends on Zn(2+) as a cofactor.

It localises to the cytoplasm. The enzyme catalyses tRNA(Met) + L-methionine + ATP = L-methionyl-tRNA(Met) + AMP + diphosphate. In terms of biological role, is required not only for elongation of protein synthesis but also for the initiation of all mRNA translation through initiator tRNA(fMet) aminoacylation. This Pseudomonas putida (strain ATCC 47054 / DSM 6125 / CFBP 8728 / NCIMB 11950 / KT2440) protein is Methionine--tRNA ligase.